The sequence spans 498 residues: UDP-N-acetylmuramoylalanine--D-glutamate ligase (498 aa).

119–125 (GTNGKST) provides a ligand contact to ATP.

This sequence belongs to the MurCDEF family.

The protein localises to the cytoplasm. The enzyme catalyses UDP-N-acetyl-alpha-D-muramoyl-L-alanine + D-glutamate + ATP = UDP-N-acetyl-alpha-D-muramoyl-L-alanyl-D-glutamate + ADP + phosphate + H(+). It functions in the pathway cell wall biogenesis; peptidoglycan biosynthesis. In terms of biological role, cell wall formation. Catalyzes the addition of glutamate to the nucleotide precursor UDP-N-acetylmuramoyl-L-alanine (UMA). The chain is UDP-N-acetylmuramoylalanine--D-glutamate ligase from Wolbachia sp. subsp. Brugia malayi (strain TRS).